The chain runs to 862 residues: Pentatricopeptide repeat-containing protein At1g74850, chloroplastic (862 aa).

The N-terminal 66 residues, 1–66 (MNLAIPNPNS…DLVLGNPSVS (66 aa)), are a transit peptide targeting the chloroplast. PPR repeat units follow at residues 104–139 (SLNDFALVFKEFAGRGDWQRSLRLFKYMQRQIWCKP), 140–174 (NEHIYTIMISLLGREGLLDKCLEVFDEMPSQGVSR), 175–209 (SVFSYTALINAYGRNGRYETSLELLDRMKNEKISP), 210–245 (SILTYNTVINACARGGLDWEGLLGLFAEMRHEGIQP), 246–280 (DIVTYNTLLSACAIRGLGDEAEMVFRTMNDGGIVP), 281–315 (DLTTYSHLVETFGKLRRLEKVCDLLGEMASGGSLP), 316–350 (DITSYNVLLEAYAKSGSIKEAMGVFHQMQAAGCTP), 351–385 (NANTYSVLLNLFGQSGRYDDVRQLFLEMKSSNTDP), 386–420 (DAATYNILIEVFGEGGYFKEVVTLFHDMVEENIEP), 421–455 (DMETYEGIIFACGKGGLHEDARKILQYMTANDIVP), 456–490 (SSKAYTGVIEAFGQAALYEEALVAFNTMHEVGSNP), 491–525 (SIETFHSLLYSFARGGLVKESEAILSRLVDSGIPR), 526–560 (NRDTFNAQIEAYKQGGKFEEAVKTYVDMEKSRCDP), 561–595 (DERTLEAVLSVYSFARLVDECREQFEEMKASDILP), and 596–630 (SIMCYCMMLAVYGKTERWDDVNELLEEMLSNRVSN). The 89-residue stretch at 713 to 801 (VDVHRMSEGG…RIMCQRSQLK (89 aa)) folds into the Smr domain. Residues 831-862 (GTRASTSSDTNHSGNPTQRRTRTKKELAGSTA) are disordered. Residues 833–848 (RASTSSDTNHSGNPTQ) are compositionally biased toward polar residues.

This sequence belongs to the PPR family. P subfamily. Mostly expressed in leaves, stems and flowers, but barely in roots.

The protein resides in the plastid. It is found in the chloroplast. In terms of biological role, involved in plastid gene expression. This Arabidopsis thaliana (Mouse-ear cress) protein is Pentatricopeptide repeat-containing protein At1g74850, chloroplastic (PTAC2).